The primary structure comprises 695 residues: Putative ATP-dependent RNA helicase L540 (695 aa).

The Helicase ATP-binding domain occupies 53–219 (LSALENYQLV…FNSVDSTVID (167 aa)). 66–73 (SSTGSGKS) contributes to the ATP binding site. Residues 164-167 (DEAH) carry the DEAH box motif. The Helicase C-terminal domain maps to 247–434 (LIEDLIHQQI…GINMMNQLMD (188 aa)).

Belongs to the DEAD box helicase family. DEAH subfamily.

It localises to the virion. It carries out the reaction ATP + H2O = ADP + phosphate + H(+). In Acanthamoeba polyphaga (Amoeba), this protein is Putative ATP-dependent RNA helicase L540.